A 246-amino-acid chain; its full sequence is Proteasome subunit alpha (246 aa).

Belongs to the peptidase T1A family. In terms of assembly, the 20S proteasome core is composed of 14 alpha and 14 beta subunits that assemble into four stacked heptameric rings, resulting in a barrel-shaped structure. The two inner rings, each composed of seven catalytic beta subunits, are sandwiched by two outer rings, each composed of seven alpha subunits. The catalytic chamber with the active sites is on the inside of the barrel. Has probably a gated structure, the ends of the cylinder being occluded by the N-termini of the alpha-subunits. Is likely capped at one or both ends by the proteasome regulatory ATPase, PAN.

Its subcellular location is the cytoplasm. The formation of the proteasomal ATPase PAN-20S proteasome complex, via the docking of the C-termini of PAN into the intersubunit pockets in the alpha-rings, triggers opening of the gate for substrate entry. Interconversion between the open-gate and close-gate conformations leads to a dynamic regulation of the 20S proteasome proteolysis activity. Its function is as follows. Component of the proteasome core, a large protease complex with broad specificity involved in protein degradation. The protein is Proteasome subunit alpha of Archaeoglobus fulgidus (strain ATCC 49558 / DSM 4304 / JCM 9628 / NBRC 100126 / VC-16).